We begin with the raw amino-acid sequence, 208 residues long: Large ribosomal subunit protein uL4 (208 aa).

The disordered stretch occupies residues 44-79; sequence QRQGTHKSKERSEISGSTRKIGRQKGGGGARRGDMN.

Belongs to the universal ribosomal protein uL4 family. Part of the 50S ribosomal subunit.

Functionally, one of the primary rRNA binding proteins, this protein initially binds near the 5'-end of the 23S rRNA. It is important during the early stages of 50S assembly. It makes multiple contacts with different domains of the 23S rRNA in the assembled 50S subunit and ribosome. Forms part of the polypeptide exit tunnel. The protein is Large ribosomal subunit protein uL4 of Bacteroides thetaiotaomicron (strain ATCC 29148 / DSM 2079 / JCM 5827 / CCUG 10774 / NCTC 10582 / VPI-5482 / E50).